The primary structure comprises 452 residues: UDP-N-acetylmuramoyl-tripeptide--D-alanyl-D-alanine ligase (452 aa).

107-113 (GSSGKTS) lines the ATP pocket.

The protein belongs to the MurCDEF family. MurF subfamily. Monomer.

It localises to the cytoplasm. It carries out the reaction D-alanyl-D-alanine + UDP-N-acetyl-alpha-D-muramoyl-L-alanyl-gamma-D-glutamyl-meso-2,6-diaminopimelate + ATP = UDP-N-acetyl-alpha-D-muramoyl-L-alanyl-gamma-D-glutamyl-meso-2,6-diaminopimeloyl-D-alanyl-D-alanine + ADP + phosphate + H(+). It functions in the pathway cell wall biogenesis; peptidoglycan biosynthesis. Involved in cell wall formation. Catalyzes the final step in the synthesis of UDP-N-acetylmuramoyl-pentapeptide, the precursor of murein. The sequence is that of UDP-N-acetylmuramoyl-tripeptide--D-alanyl-D-alanine ligase from Escherichia coli (strain K12).